Reading from the N-terminus, the 232-residue chain is Ribose-5-phosphate isomerase A (232 aa).

Substrate is bound by residues Thr-31–Thr-34, Asp-88–Asp-91, and Lys-101–Gly-104. Glu-110 (proton acceptor) is an active-site residue. Substrate is bound at residue Lys-128.

Belongs to the ribose 5-phosphate isomerase family. As to quaternary structure, homodimer.

The catalysed reaction is aldehydo-D-ribose 5-phosphate = D-ribulose 5-phosphate. It participates in carbohydrate degradation; pentose phosphate pathway; D-ribose 5-phosphate from D-ribulose 5-phosphate (non-oxidative stage): step 1/1. Its function is as follows. Catalyzes the reversible conversion of ribose-5-phosphate to ribulose 5-phosphate. This is Ribose-5-phosphate isomerase A from Lactobacillus johnsonii (strain CNCM I-12250 / La1 / NCC 533).